Here is a 101-residue protein sequence, read N- to C-terminus: Phosphoribosyl-AMP cyclohydrolase (101 aa).

Asp71 serves as a coordination point for Mg(2+). Cys72 contributes to the Zn(2+) binding site. Asp73 and Asp75 together coordinate Mg(2+). Zn(2+)-binding residues include Cys88 and Cys95.

Belongs to the PRA-CH family. As to quaternary structure, homodimer. Mg(2+) is required as a cofactor. Requires Zn(2+) as cofactor.

The protein localises to the cytoplasm. The catalysed reaction is 1-(5-phospho-beta-D-ribosyl)-5'-AMP + H2O = 1-(5-phospho-beta-D-ribosyl)-5-[(5-phospho-beta-D-ribosylamino)methylideneamino]imidazole-4-carboxamide. The protein operates within amino-acid biosynthesis; L-histidine biosynthesis; L-histidine from 5-phospho-alpha-D-ribose 1-diphosphate: step 3/9. Catalyzes the hydrolysis of the adenine ring of phosphoribosyl-AMP. This Bacillus cereus (strain AH820) protein is Phosphoribosyl-AMP cyclohydrolase.